The sequence spans 101 residues: Small ribosomal subunit protein uS10 (101 aa).

This sequence belongs to the universal ribosomal protein uS10 family. As to quaternary structure, part of the 30S ribosomal subunit.

Its function is as follows. Involved in the binding of tRNA to the ribosomes. The protein is Small ribosomal subunit protein uS10 of Parabacteroides distasonis (strain ATCC 8503 / DSM 20701 / CIP 104284 / JCM 5825 / NCTC 11152).